Consider the following 572-residue polypeptide: Proline--tRNA ligase (572 aa).

It belongs to the class-II aminoacyl-tRNA synthetase family. ProS type 1 subfamily. As to quaternary structure, homodimer.

The protein resides in the cytoplasm. The enzyme catalyses tRNA(Pro) + L-proline + ATP = L-prolyl-tRNA(Pro) + AMP + diphosphate. Its function is as follows. Catalyzes the attachment of proline to tRNA(Pro) in a two-step reaction: proline is first activated by ATP to form Pro-AMP and then transferred to the acceptor end of tRNA(Pro). As ProRS can inadvertently accommodate and process non-cognate amino acids such as alanine and cysteine, to avoid such errors it has two additional distinct editing activities against alanine. One activity is designated as 'pretransfer' editing and involves the tRNA(Pro)-independent hydrolysis of activated Ala-AMP. The other activity is designated 'posttransfer' editing and involves deacylation of mischarged Ala-tRNA(Pro). The misacylated Cys-tRNA(Pro) is not edited by ProRS. The sequence is that of Proline--tRNA ligase from Dichelobacter nodosus (strain VCS1703A).